A 164-amino-acid chain; its full sequence is Lipoprotein signal peptidase (164 aa).

3 helical membrane passes run 12-32, 70-90, and 93-113; these read FLWL…WIVA, WLFT…LKET, and QQVM…GNVF. Catalysis depends on residues Asp123 and Asp141. Residues 133-153 traverse the membrane as a helical segment; it reads YWPAFNVADSAICLGAFLLVI.

Belongs to the peptidase A8 family.

It is found in the cell inner membrane. It carries out the reaction Release of signal peptides from bacterial membrane prolipoproteins. Hydrolyzes -Xaa-Yaa-Zaa-|-(S,diacylglyceryl)Cys-, in which Xaa is hydrophobic (preferably Leu), and Yaa (Ala or Ser) and Zaa (Gly or Ala) have small, neutral side chains.. It functions in the pathway protein modification; lipoprotein biosynthesis (signal peptide cleavage). Functionally, this protein specifically catalyzes the removal of signal peptides from prolipoproteins. The polypeptide is Lipoprotein signal peptidase (Pseudoalteromonas atlantica (strain T6c / ATCC BAA-1087)).